We begin with the raw amino-acid sequence, 571 residues long: Folylpolyglutamate synthase (571 aa).

122 to 125 (GKGS) provides a ligand contact to ATP. Mg(2+) contacts are provided by serine 146, glutamate 215, and histidine 243. Residues arginine 363 and aspartate 385 each contribute to the ATP site.

This sequence belongs to the folylpolyglutamate synthase family. A monovalent cation serves as cofactor. As to expression, expressed in both shoots and roots, but expression in roots is higher compared with shoots. Distinct expression in the quiescent center (QC) region of the root tip. Also expressed in vascular tissues of the cotyledons and hypocotyls, and the first true leaves of 7 days old seedlings.

It localises to the plastid. Its subcellular location is the chloroplast. The enzyme catalyses (6S)-5,6,7,8-tetrahydrofolyl-(gamma-L-Glu)(n) + L-glutamate + ATP = (6S)-5,6,7,8-tetrahydrofolyl-(gamma-L-Glu)(n+1) + ADP + phosphate + H(+). The protein operates within cofactor biosynthesis; tetrahydrofolylpolyglutamate biosynthesis. In terms of biological role, catalyzes conversion of folates to polyglutamate derivatives allowing concentration of folate compounds in the cell and the intracellular retention of these cofactors, which are important substrates for most of the folate-dependent enzymes that are involved in one-carbon transfer reactions involved in purine, pyrimidine and amino acid synthesis. Essential for organellar and whole-plant folate homeostasis. Required for postembryonic root development. Generates polyglutamylated folate cofactors to support C1 metabolism required for meristem maintenance and cell expansion during postembryonic root development. The protein is Folylpolyglutamate synthase of Arabidopsis thaliana (Mouse-ear cress).